The sequence spans 299 residues: Ribosomal protein L11 methyltransferase (299 aa).

Residues T152, G172, D194, and N234 each coordinate S-adenosyl-L-methionine.

Belongs to the methyltransferase superfamily. PrmA family.

Its subcellular location is the cytoplasm. The catalysed reaction is L-lysyl-[protein] + 3 S-adenosyl-L-methionine = N(6),N(6),N(6)-trimethyl-L-lysyl-[protein] + 3 S-adenosyl-L-homocysteine + 3 H(+). Methylates ribosomal protein L11. This Geobacter metallireducens (strain ATCC 53774 / DSM 7210 / GS-15) protein is Ribosomal protein L11 methyltransferase.